A 295-amino-acid chain; its full sequence is Probable protein phosphatase 2C 5 (295 aa).

The PPM-type phosphatase domain occupies 23-294 (QYAATHMQGW…DNMTCILVLF (272 aa)). The Mn(2+) site is built by Asp57 and Gly58. The tract at residues 151-170 (NRDGKPFDMSKDHKPDDDQE) is disordered. Mn(2+) is bound by residues Asp237 and Asp285.

It belongs to the PP2C family. Mg(2+) is required as a cofactor. It depends on Mn(2+) as a cofactor.

Its subcellular location is the membrane. The enzyme catalyses O-phospho-L-seryl-[protein] + H2O = L-seryl-[protein] + phosphate. The catalysed reaction is O-phospho-L-threonyl-[protein] + H2O = L-threonyl-[protein] + phosphate. Functionally, enzyme with a broad specificity. In Paramecium tetraurelia, this protein is Probable protein phosphatase 2C 5.